The following is a 481-amino-acid chain: ATP synthase subunit beta (481 aa).

160–167 is a binding site for ATP; the sequence is GGAGVGKT.

This sequence belongs to the ATPase alpha/beta chains family. As to quaternary structure, F-type ATPases have 2 components, CF(1) - the catalytic core - and CF(0) - the membrane proton channel. CF(1) has five subunits: alpha(3), beta(3), gamma(1), delta(1), epsilon(1). CF(0) has three main subunits: a(1), b(2) and c(9-12). The alpha and beta chains form an alternating ring which encloses part of the gamma chain. CF(1) is attached to CF(0) by a central stalk formed by the gamma and epsilon chains, while a peripheral stalk is formed by the delta and b chains.

It localises to the cell inner membrane. It carries out the reaction ATP + H2O + 4 H(+)(in) = ADP + phosphate + 5 H(+)(out). Produces ATP from ADP in the presence of a proton gradient across the membrane. The catalytic sites are hosted primarily by the beta subunits. This chain is ATP synthase subunit beta, found in Stigmatella aurantiaca.